A 467-amino-acid chain; its full sequence is Cysteine--tRNA ligase (467 aa).

A Zn(2+)-binding site is contributed by cysteine 29. Residues 31-41 carry the 'HIGH' region motif; it reads ATVQGEPHIGH. Residues cysteine 207, histidine 232, and glutamate 236 each contribute to the Zn(2+) site. A 'KMSKS' region motif is present at residues 263–267; it reads KMSKS. Lysine 266 contributes to the ATP binding site. The disordered stretch occupies residues 446 to 467; it reads IDVTDTPNGPEWSLRTARGKAN.

Belongs to the class-I aminoacyl-tRNA synthetase family. As to quaternary structure, monomer. Zn(2+) is required as a cofactor.

It localises to the cytoplasm. It carries out the reaction tRNA(Cys) + L-cysteine + ATP = L-cysteinyl-tRNA(Cys) + AMP + diphosphate. This chain is Cysteine--tRNA ligase, found in Nocardia farcinica (strain IFM 10152).